Consider the following 90-residue polypeptide: Small ribosomal subunit protein bS16 (90 aa).

This sequence belongs to the bacterial ribosomal protein bS16 family.

The sequence is that of Small ribosomal subunit protein bS16 from Bacillus anthracis (strain A0248).